The following is a 289-amino-acid chain: Probable endonuclease 4 (289 aa).

Residues His75, His115, Glu153, Asp187, His190, His224, Asp237, His239, and Glu269 each coordinate Zn(2+).

This sequence belongs to the AP endonuclease 2 family. Requires Zn(2+) as cofactor.

It carries out the reaction Endonucleolytic cleavage to 5'-phosphooligonucleotide end-products.. Its function is as follows. Endonuclease IV plays a role in DNA repair. It cleaves phosphodiester bonds at apurinic or apyrimidinic (AP) sites, generating a 3'-hydroxyl group and a 5'-terminal sugar phosphate. The protein is Probable endonuclease 4 of Chlamydia caviae (strain ATCC VR-813 / DSM 19441 / 03DC25 / GPIC) (Chlamydophila caviae).